Here is a 374-residue protein sequence, read N- to C-terminus: UDP-N-acetylglucosamine--N-acetylmuramyl-(pentapeptide) pyrophosphoryl-undecaprenol N-acetylglucosamine transferase (374 aa).

UDP-N-acetyl-alpha-D-glucosamine-binding positions include 13–15 (TGG), asparagine 124, arginine 165, serine 193, and glutamine 294.

This sequence belongs to the glycosyltransferase 28 family. MurG subfamily.

Its subcellular location is the cell inner membrane. The enzyme catalyses di-trans,octa-cis-undecaprenyl diphospho-N-acetyl-alpha-D-muramoyl-L-alanyl-D-glutamyl-meso-2,6-diaminopimeloyl-D-alanyl-D-alanine + UDP-N-acetyl-alpha-D-glucosamine = di-trans,octa-cis-undecaprenyl diphospho-[N-acetyl-alpha-D-glucosaminyl-(1-&gt;4)]-N-acetyl-alpha-D-muramoyl-L-alanyl-D-glutamyl-meso-2,6-diaminopimeloyl-D-alanyl-D-alanine + UDP + H(+). Its pathway is cell wall biogenesis; peptidoglycan biosynthesis. Its function is as follows. Cell wall formation. Catalyzes the transfer of a GlcNAc subunit on undecaprenyl-pyrophosphoryl-MurNAc-pentapeptide (lipid intermediate I) to form undecaprenyl-pyrophosphoryl-MurNAc-(pentapeptide)GlcNAc (lipid intermediate II). The chain is UDP-N-acetylglucosamine--N-acetylmuramyl-(pentapeptide) pyrophosphoryl-undecaprenol N-acetylglucosamine transferase from Rhizobium rhizogenes (strain K84 / ATCC BAA-868) (Agrobacterium radiobacter).